The sequence spans 530 residues: Inactive ubiquitin carboxyl-terminal hydrolase 17-like protein 4 (530 aa).

In terms of domain architecture, USP spans 80 to 375 (AGLQNMGNTC…QAYVLFYIQK (296 aa)). Basic and acidic residues predominate over residues 382-392 (SESVSRGREPR). 2 disordered regions span residues 382–410 (SESVSRGREPRALGAEDTDRPATQGELKR) and 493–530 (NSTDQESMNTGTLASLQGRTRRSKGKNKHSKRSLLVCQ). Residues 495–510 (TDQESMNTGTLASLQG) show a composition bias toward polar residues. A compositionally biased stretch (basic residues) spans 511–524 (RTRRSKGKNKHSKR).

The protein belongs to the peptidase C19 family. USP17 subfamily.

Its subcellular location is the nucleus. It localises to the endoplasmic reticulum. The polypeptide is Inactive ubiquitin carboxyl-terminal hydrolase 17-like protein 4 (USP17L4) (Homo sapiens (Human)).